Reading from the N-terminus, the 496-residue chain is Glutamyl-tRNA(Gln) amidotransferase subunit A, mitochondrial (496 aa).

Residues Lys80 and Ser161 each act as charge relay system in the active site. Ser185 (acyl-ester intermediate) is an active-site residue.

Belongs to the amidase family. GatA subfamily. Subunit of the heterotrimeric GatCAB amidotransferase (AdT) complex, composed of A, B and C subunits.

The protein localises to the mitochondrion. The catalysed reaction is L-glutamyl-tRNA(Gln) + L-glutamine + ATP + H2O = L-glutaminyl-tRNA(Gln) + L-glutamate + ADP + phosphate + H(+). Functionally, allows the formation of correctly charged Gln-tRNA(Gln) through the transamidation of misacylated Glu-tRNA(Gln) in the mitochondria. The reaction takes place in the presence of glutamine and ATP through an activated gamma-phospho-Glu-tRNA(Gln). In Culex quinquefasciatus (Southern house mosquito), this protein is Glutamyl-tRNA(Gln) amidotransferase subunit A, mitochondrial.